The chain runs to 88 residues: Small ribosomal subunit protein uS15 (88 aa).

Positions 1–23 are disordered; it reads MIASSVKAEVVKSNARSANDTGS. The segment covering 14-23 has biased composition (polar residues); the sequence is NARSANDTGS.

The protein belongs to the universal ribosomal protein uS15 family. In terms of assembly, part of the 30S ribosomal subunit. Forms a bridge to the 50S subunit in the 70S ribosome, contacting the 23S rRNA.

In terms of biological role, one of the primary rRNA binding proteins, it binds directly to 16S rRNA where it helps nucleate assembly of the platform of the 30S subunit by binding and bridging several RNA helices of the 16S rRNA. Forms an intersubunit bridge (bridge B4) with the 23S rRNA of the 50S subunit in the ribosome. In Delftia acidovorans (strain DSM 14801 / SPH-1), this protein is Small ribosomal subunit protein uS15.